A 518-amino-acid chain; its full sequence is Squalene monooxygenase 1,2 (518 aa).

2 helical membrane passes run Met3–Phe23 and Gly48–Ala68. Residues Val58–Gly59, Glu78–Arg79, Arg86, Phe91, Arg158, Val174, Asp337, and Met350 each bind FAD. The chain crosses the membrane as a helical span at residues Leu448–Pro468.

The protein belongs to the squalene monooxygenase family. It depends on FAD as a cofactor.

Its subcellular location is the membrane. It carries out the reaction squalene + reduced [NADPH--hemoprotein reductase] + O2 = (S)-2,3-epoxysqualene + oxidized [NADPH--hemoprotein reductase] + H2O + H(+). It participates in terpene metabolism; lanosterol biosynthesis; lanosterol from farnesyl diphosphate: step 2/3. Catalyzes the stereospecific oxidation of squalene to (S)-2,3-epoxysqualene, and is considered to be a rate-limiting enzyme in steroid biosynthesis. The chain is Squalene monooxygenase 1,2 (SQP1,2) from Brassica napus (Rape).